Consider the following 154-residue polypeptide: Superoxide dismutase [Cu-Zn] (154 aa).

Residues His47, His49, and His64 each contribute to the Cu cation site. Cys58 and Cys147 form a disulfide bridge. His64, His72, His81, and Asp84 together coordinate Zn(2+). His121 serves as a coordination point for Cu cation. Basic and acidic residues predominate over residues 125-136 (DDLGKGGNEESL). The disordered stretch occupies residues 125–144 (DDLGKGGNEESLKTGNAGPR). Arg144 contacts substrate.

This sequence belongs to the Cu-Zn superoxide dismutase family. As to quaternary structure, homodimer. Cu cation serves as cofactor. It depends on Zn(2+) as a cofactor.

It localises to the cytoplasm. The enzyme catalyses 2 superoxide + 2 H(+) = H2O2 + O2. In terms of biological role, destroys radicals which are normally produced within the cells and which are toxic to biological systems. This Neurospora crassa (strain ATCC 24698 / 74-OR23-1A / CBS 708.71 / DSM 1257 / FGSC 987) protein is Superoxide dismutase [Cu-Zn] (sod-1).